The sequence spans 487 residues: Chromosomal replication initiator protein DnaA (487 aa).

Residues 1–79 are domain I, interacts with DnaA modulators; sequence MEKSKNIWSL…GYNNIVIVFT (79 aa). Residues 79 to 142 are domain II; it reads TNQPPKTHSN…EEEPTNFKNP (64 aa). The domain III, AAA+ region stretch occupies residues 143-359; it reads FLKKRYTFEN…AAVTKLKAYI (217 aa). Residues Gly-187, Gly-189, Lys-190, and Thr-191 each contribute to the ATP site. Positions 360–487 are domain IV, binds dsDNA; that stretch reads DLDNIEIDIE…TELMNKIKKN (128 aa).

This sequence belongs to the DnaA family. In terms of assembly, oligomerizes as a right-handed, spiral filament on DNA at oriC.

Its subcellular location is the cytoplasm. Functionally, plays an essential role in the initiation and regulation of chromosomal replication. ATP-DnaA binds to the origin of replication (oriC) to initiate formation of the DNA replication initiation complex once per cell cycle. Binds the DnaA box (a 9 base pair repeat at the origin) and separates the double-stranded (ds)DNA. Forms a right-handed helical filament on oriC DNA; dsDNA binds to the exterior of the filament while single-stranded (ss)DNA is stabiized in the filament's interior. The ATP-DnaA-oriC complex binds and stabilizes one strand of the AT-rich DNA unwinding element (DUE), permitting loading of DNA polymerase. After initiation quickly degrades to an ADP-DnaA complex that is not apt for DNA replication. Binds acidic phospholipids. This is Chromosomal replication initiator protein DnaA from Borreliella burgdorferi (strain ZS7) (Borrelia burgdorferi).